The chain runs to 372 residues: Chaperone protein DnaJ (372 aa).

The 65-residue stretch at 5 to 69 (DYYEVLGVSK…DKRKQYDQFG (65 aa)) folds into the J domain. The CR-type zinc finger occupies 139–221 (GVDKIIELDL…CKGKGKYLER (83 aa)). The Zn(2+) site is built by C152, C155, C169, C172, C195, C198, C209, and C212. 4 CXXCXGXG motif repeats span residues 152–159 (CSVCFGSG), 169–176 (CNNCHGTG), 195–202 (CNVCNGAG), and 209–216 (CKNCKGKG).

The protein belongs to the DnaJ family. Homodimer. Zn(2+) is required as a cofactor.

It is found in the cytoplasm. In terms of biological role, participates actively in the response to hyperosmotic and heat shock by preventing the aggregation of stress-denatured proteins and by disaggregating proteins, also in an autonomous, DnaK-independent fashion. Unfolded proteins bind initially to DnaJ; upon interaction with the DnaJ-bound protein, DnaK hydrolyzes its bound ATP, resulting in the formation of a stable complex. GrpE releases ADP from DnaK; ATP binding to DnaK triggers the release of the substrate protein, thus completing the reaction cycle. Several rounds of ATP-dependent interactions between DnaJ, DnaK and GrpE are required for fully efficient folding. Also involved, together with DnaK and GrpE, in the DNA replication of plasmids through activation of initiation proteins. This chain is Chaperone protein DnaJ, found in Mycoplasma mycoides subsp. mycoides SC (strain CCUG 32753 / NCTC 10114 / PG1).